The following is a 163-amino-acid chain: NADH-quinone oxidoreductase subunit I (163 aa).

4Fe-4S ferredoxin-type domains are found at residues 53-83 and 94-123; these read LRRY…IEAG and VRYD…EGPN. [4Fe-4S] cluster-binding residues include cysteine 63, cysteine 66, cysteine 69, cysteine 73, cysteine 103, cysteine 106, cysteine 109, and cysteine 113.

Belongs to the complex I 23 kDa subunit family. In terms of assembly, NDH-1 is composed of 14 different subunits. Subunits NuoA, H, J, K, L, M, N constitute the membrane sector of the complex. [4Fe-4S] cluster serves as cofactor.

It localises to the cell inner membrane. It catalyses the reaction a quinone + NADH + 5 H(+)(in) = a quinol + NAD(+) + 4 H(+)(out). Its function is as follows. NDH-1 shuttles electrons from NADH, via FMN and iron-sulfur (Fe-S) centers, to quinones in the respiratory chain. The immediate electron acceptor for the enzyme in this species is believed to be ubiquinone. Couples the redox reaction to proton translocation (for every two electrons transferred, four hydrogen ions are translocated across the cytoplasmic membrane), and thus conserves the redox energy in a proton gradient. The polypeptide is NADH-quinone oxidoreductase subunit I (Brucella melitensis biotype 1 (strain ATCC 23456 / CCUG 17765 / NCTC 10094 / 16M)).